Here is a 217-residue protein sequence, read N- to C-terminus: Probable transaldolase (217 aa).

K83 functions as the Schiff-base intermediate with substrate in the catalytic mechanism.

Belongs to the transaldolase family. Type 3B subfamily.

It is found in the cytoplasm. The enzyme catalyses D-sedoheptulose 7-phosphate + D-glyceraldehyde 3-phosphate = D-erythrose 4-phosphate + beta-D-fructose 6-phosphate. It functions in the pathway carbohydrate degradation; pentose phosphate pathway; D-glyceraldehyde 3-phosphate and beta-D-fructose 6-phosphate from D-ribose 5-phosphate and D-xylulose 5-phosphate (non-oxidative stage): step 2/3. Its function is as follows. Transaldolase is important for the balance of metabolites in the pentose-phosphate pathway. The chain is Probable transaldolase from Jannaschia sp. (strain CCS1).